The primary structure comprises 496 residues: Guanosine-5'-triphosphate,3'-diphosphate pyrophosphatase (496 aa).

The protein belongs to the GppA/Ppx family. GppA subfamily.

It catalyses the reaction guanosine 3'-diphosphate 5'-triphosphate + H2O = guanosine 3',5'-bis(diphosphate) + phosphate + H(+). It participates in purine metabolism; ppGpp biosynthesis; ppGpp from GTP: step 2/2. In terms of biological role, catalyzes the conversion of pppGpp to ppGpp. Guanosine pentaphosphate (pppGpp) is a cytoplasmic signaling molecule which together with ppGpp controls the 'stringent response', an adaptive process that allows bacteria to respond to amino acid starvation, resulting in the coordinated regulation of numerous cellular activities. The sequence is that of Guanosine-5'-triphosphate,3'-diphosphate pyrophosphatase from Aeromonas hydrophila subsp. hydrophila (strain ATCC 7966 / DSM 30187 / BCRC 13018 / CCUG 14551 / JCM 1027 / KCTC 2358 / NCIMB 9240 / NCTC 8049).